The sequence spans 212 residues: 3,4-dihydroxy-2-butanone 4-phosphate synthase (212 aa).

Residues 37–38 (RE), D42, 150–154 (RRGHT), and E174 each bind D-ribulose 5-phosphate. E38 contributes to the Mg(2+) binding site. H153 is a binding site for Mg(2+).

The protein belongs to the DHBP synthase family. As to quaternary structure, homodimer. Mg(2+) is required as a cofactor. Mn(2+) serves as cofactor.

It catalyses the reaction D-ribulose 5-phosphate = (2S)-2-hydroxy-3-oxobutyl phosphate + formate + H(+). It participates in cofactor biosynthesis; riboflavin biosynthesis; 2-hydroxy-3-oxobutyl phosphate from D-ribulose 5-phosphate: step 1/1. Its function is as follows. Catalyzes the conversion of D-ribulose 5-phosphate to formate and 3,4-dihydroxy-2-butanone 4-phosphate. This chain is 3,4-dihydroxy-2-butanone 4-phosphate synthase, found in Histophilus somni (strain 129Pt) (Haemophilus somnus).